The primary structure comprises 102 residues: Monothiol glutaredoxin-S10 (102 aa).

A Glutaredoxin domain is found at 1 to 101; that stretch reads MDVVARLASQ…ILLKEAGALW (101 aa). Residue C21 participates in [2Fe-2S] cluster binding. Residues 99 to 102 carry the Responsive for interaction with TGA factors motif; that stretch reads ALWL.

The protein belongs to the glutaredoxin family. CC-type subfamily.

The protein resides in the cytoplasm. Its subcellular location is the nucleus. May only reduce GSH-thiol disulfides, but not protein disulfides. The chain is Monothiol glutaredoxin-S10 (GRXS10) from Arabidopsis thaliana (Mouse-ear cress).